The chain runs to 188 residues: Translocon-associated protein subunit beta (188 aa).

The N-terminal stretch at 1–15 is a signal peptide; sequence MKFSLFALLFVVVSC. Residues 16-151 are Lumenal-facing; sequence VDVGTQTRDA…EYDRRFAPKY (136 aa). Asn-93 and Asn-109 each carry an N-linked (GlcNAc...) asparagine glycan. The helical transmembrane segment at 152 to 172 threads the bilayer; that stretch reads TYFLVFFLIVAPTTLGSFLLF. Residues 173–188 lie on the Cytoplasmic side of the membrane; the sequence is QQSKARFPNVIKKKST.

This sequence belongs to the TRAP-beta family. In terms of assembly, heterotetramer of TRAP-alpha, TRAP-beta, TRAP-delta and TRAP-gamma.

The protein resides in the endoplasmic reticulum membrane. TRAP proteins are part of a complex whose function is to bind calcium to the ER membrane and thereby regulate the retention of ER resident proteins. The sequence is that of Translocon-associated protein subunit beta from Caenorhabditis elegans.